A 568-amino-acid chain; its full sequence is Phosphomethylpyrimidine synthase (568 aa).

Substrate contacts are provided by residues asparagine 188, methionine 217, tyrosine 246, histidine 282, 302–304 (SRG), 343–346 (DGLR), and glutamate 382. Residue histidine 386 participates in Zn(2+) binding. Tyrosine 409 serves as a coordination point for substrate. Histidine 450 provides a ligand contact to Zn(2+). [4Fe-4S] cluster-binding residues include cysteine 530, cysteine 533, and cysteine 538.

It belongs to the ThiC family. In terms of assembly, homodimer. The cofactor is [4Fe-4S] cluster.

The enzyme catalyses 5-amino-1-(5-phospho-beta-D-ribosyl)imidazole + S-adenosyl-L-methionine = 4-amino-2-methyl-5-(phosphooxymethyl)pyrimidine + CO + 5'-deoxyadenosine + formate + L-methionine + 3 H(+). It functions in the pathway cofactor biosynthesis; thiamine diphosphate biosynthesis. Functionally, catalyzes the synthesis of the hydroxymethylpyrimidine phosphate (HMP-P) moiety of thiamine from aminoimidazole ribotide (AIR) in a radical S-adenosyl-L-methionine (SAM)-dependent reaction. The sequence is that of Phosphomethylpyrimidine synthase from Idiomarina loihiensis (strain ATCC BAA-735 / DSM 15497 / L2-TR).